A 603-amino-acid polypeptide reads, in one-letter code: Elongation factor 4 (603 aa).

In terms of domain architecture, tr-type G spans 9-191 (SNIRNFSIIA…RIVRQIPPPK (183 aa)). Residues 21–26 (DHGKST) and 138–141 (NKID) contribute to the GTP site.

Belongs to the TRAFAC class translation factor GTPase superfamily. Classic translation factor GTPase family. LepA subfamily.

Its subcellular location is the cell inner membrane. The catalysed reaction is GTP + H2O = GDP + phosphate + H(+). In terms of biological role, required for accurate and efficient protein synthesis under certain stress conditions. May act as a fidelity factor of the translation reaction, by catalyzing a one-codon backward translocation of tRNAs on improperly translocated ribosomes. Back-translocation proceeds from a post-translocation (POST) complex to a pre-translocation (PRE) complex, thus giving elongation factor G a second chance to translocate the tRNAs correctly. Binds to ribosomes in a GTP-dependent manner. This Idiomarina loihiensis (strain ATCC BAA-735 / DSM 15497 / L2-TR) protein is Elongation factor 4.